The sequence spans 158 residues: C-type lectin galactose-binding isoform (158 aa).

Residues 1-20 form the signal peptide; that stretch reads MGRFLLVTLSLLVVAFSLNG. 3 disulfide bridges follow: Cys26–Cys37, Cys54–Cys154, and Cys129–Cys146. Residues 33–155 enclose the C-type lectin domain; it reads KNGYCYKVFK…CTALRPFLCQ (123 aa). Gln119, Asp121, Glu127, Asn142, and Asp143 together coordinate Ca(2+). The short motif at 119–121 is the Galactose-binding element; it reads QPD.

The protein belongs to the true venom lectin family. Homodimer; disulfide-linked. In terms of tissue distribution, expressed by the venom gland.

Its subcellular location is the secreted. Galactose-binding lectin that binds to and agglutinates erythrocytes in a calcium-dependent manner. This is C-type lectin galactose-binding isoform from Hoplocephalus stephensii (Stephens's banded snake).